The sequence spans 126 residues: Large ribosomal subunit protein eL18 (126 aa).

This sequence belongs to the eukaryotic ribosomal protein eL18 family.

In Methanosarcina mazei (strain ATCC BAA-159 / DSM 3647 / Goe1 / Go1 / JCM 11833 / OCM 88) (Methanosarcina frisia), this protein is Large ribosomal subunit protein eL18.